Consider the following 521-residue polypeptide: Zinc finger CCCH domain-containing protein 45 (521 aa).

3 disordered regions span residues 28–60 (TEDSPANVASQPQRHSYPSRKPRGPDLPPGFEG), 142–185 (TPAI…PLCS), and 296–319 (SRSFTNPERRVSPPKPVNGSISPP). The segment covering 34–43 (NVASQPQRHS) has biased composition (polar residues). The span at 159–168 (EESSNSKVES) shows a compositional bias: low complexity. Polar residues predominate over residues 170 to 185 (VTANKQGQLETKPLCS). A C3H1-type zinc finger spans residues 469–497 (NKIHQQCIYFGTANGCNMGDSCTYVHDRY).

The protein is Zinc finger CCCH domain-containing protein 45 of Arabidopsis thaliana (Mouse-ear cress).